The sequence spans 257 residues: MKPLVIKLGGVLLDTPAAMENLFTALADYQQNFARPLLIVHGGGCLVDDLMKRLNLPVQKKNGLRVTPADQIDIIVGALAGIANKTLVAQAAKFKLNPVGLCLADGNLTQATQFDPELGHVAMVVAKNPALLNNLLGDAFLPIISSIAVDDNGLLMNVNADQAATAIAALINADLVMLSDVDGVLDANKQRLTELNSAQIEQLIEDKVITDGMIVKVNAALDAAKILNCGVDIANWKYPEKLTALFAGEIIGTRINP.

Substrate is bound by residues 43–44 (GG), arginine 65, and asparagine 157.

The protein belongs to the acetylglutamate kinase family. ArgB subfamily.

It is found in the cytoplasm. It carries out the reaction N-acetyl-L-glutamate + ATP = N-acetyl-L-glutamyl 5-phosphate + ADP. It functions in the pathway amino-acid biosynthesis; L-arginine biosynthesis; N(2)-acetyl-L-ornithine from L-glutamate: step 2/4. Functionally, catalyzes the ATP-dependent phosphorylation of N-acetyl-L-glutamate. The chain is Acetylglutamate kinase from Mannheimia succiniciproducens (strain KCTC 0769BP / MBEL55E).